The sequence spans 802 residues: Acetyl-CoA decarbonylase/synthase complex subunit alpha 1 (802 aa).

Residues Cys-68, Cys-71, Cys-76, and Cys-86 each coordinate [4Fe-4S] cluster. His-109 contributes to the CO binding site. [Ni-4Fe-4S] cluster is bound by residues His-243, Cys-271, and Cys-310. 2 consecutive 4Fe-4S ferredoxin-type domains span residues Asp-395–Gly-424 and Ser-435–Ile-464. [4Fe-4S] cluster is bound by residues Cys-405, Cys-408, Cys-411, Cys-415, Cys-444, Cys-447, Cys-450, and Cys-454. [Ni-4Fe-4S] cluster contacts are provided by Cys-512, Cys-541, and Cys-576.

Belongs to the Ni-containing carbon monoxide dehydrogenase family. Heterotetramer of two alpha and two epsilon subunits. The ACDS complex is made up of alpha, epsilon, beta, gamma and delta subunits with a probable stoichiometry of (alpha(2)epsilon(2))(4)-beta(8)-(gamma(1)delta(1))(8). Requires [4Fe-4S] cluster as cofactor. [Ni-4Fe-4S] cluster is required as a cofactor.

The enzyme catalyses CO + 2 oxidized [2Fe-2S]-[ferredoxin] + H2O = 2 reduced [2Fe-2S]-[ferredoxin] + CO2 + 2 H(+). Part of the ACDS complex that catalyzes the reversible cleavage of acetyl-CoA, allowing autotrophic growth from CO(2). The alpha-epsilon subcomponent functions as a carbon monoxide dehydrogenase. This Archaeoglobus fulgidus (strain ATCC 49558 / DSM 4304 / JCM 9628 / NBRC 100126 / VC-16) protein is Acetyl-CoA decarbonylase/synthase complex subunit alpha 1.